The primary structure comprises 417 residues: Serine hydroxymethyltransferase (417 aa).

Lys-54 carries the N6-acetyllysine modification. (6S)-5,6,7,8-tetrahydrofolate contacts are provided by residues Leu-121 and 125-127 (GHL). Lys-229 is subject to N6-(pyridoxal phosphate)lysine. N6-acetyllysine is present on residues Lys-250, Lys-285, and Lys-354. 355–357 (SPF) lines the (6S)-5,6,7,8-tetrahydrofolate pocket. At Lys-375 the chain carries N6-acetyllysine.

Belongs to the SHMT family. In terms of assembly, homodimer. Pyridoxal 5'-phosphate serves as cofactor.

The protein resides in the cytoplasm. The enzyme catalyses (6R)-5,10-methylene-5,6,7,8-tetrahydrofolate + glycine + H2O = (6S)-5,6,7,8-tetrahydrofolate + L-serine. The protein operates within one-carbon metabolism; tetrahydrofolate interconversion. It participates in amino-acid biosynthesis; glycine biosynthesis; glycine from L-serine: step 1/1. In terms of biological role, catalyzes the reversible interconversion of serine and glycine with tetrahydrofolate (THF) serving as the one-carbon carrier. This reaction serves as the major source of one-carbon groups required for the biosynthesis of purines, thymidylate, methionine, and other important biomolecules. Also exhibits THF-independent aldolase activity toward beta-hydroxyamino acids, producing glycine and aldehydes, via a retro-aldol mechanism. The sequence is that of Serine hydroxymethyltransferase from Escherichia coli O157:H7.